Reading from the N-terminus, the 187-residue chain is uncharacterized protein (187 aa).

Residues 139-168 (ESKDRKALKNAARKAEKNAHEESSYFRVDD) show a composition bias toward basic and acidic residues. Positions 139-172 (ESKDRKALKNAARKAEKNAHEESSYFRVDDPEPE) are disordered.

This is an uncharacterized protein from Caenorhabditis elegans.